We begin with the raw amino-acid sequence, 571 residues long: ATP-dependent RNA helicase RhlB (571 aa).

The Q motif motif lies at 9–37 (VTFSSFDLHPALIAGLESAGFTRCTPIQA). The 181-residue stretch at 40 to 220 (LPVALPGGDV…YEHMNEPEKL (181 aa)) folds into the Helicase ATP-binding domain. Position 53–60 (53–60 (AQTGTGKT)) interacts with ATP. Residues 166 to 169 (DEAD) carry the DEAD box motif. Residues 231-393 (RVRQRIYFPS…PVTSELLTPL (163 aa)) enclose the Helicase C-terminal domain. The segment at 391–558 (TPLPRAPRVP…KPSGSPSLLS (168 aa)) is disordered. Residues 402 to 411 (EGEEADDDAG) are compositionally biased toward acidic residues. The segment covering 419–432 (REAREQRAAEEQRR) has biased composition (basic and acidic residues). Residues 435-448 (GRGGPGGSRSGSGG) are compositionally biased toward gly residues. Residues 449–460 (GRRDGAGADGKP) show a composition bias toward basic and acidic residues. The span at 483–497 (VVAAVAAQAPSAGVA) shows a compositional bias: low complexity. Over residues 503–512 (PRKRRRRRNG) the composition is skewed to basic residues. Positions 539-558 (VVAKPVRAAAKPSGSPSLLS) are enriched in low complexity.

Belongs to the DEAD box helicase family. RhlB subfamily. In terms of assembly, component of the RNA degradosome, which is a multiprotein complex involved in RNA processing and mRNA degradation.

It localises to the cytoplasm. The enzyme catalyses ATP + H2O = ADP + phosphate + H(+). Functionally, DEAD-box RNA helicase involved in RNA degradation. Has RNA-dependent ATPase activity and unwinds double-stranded RNA. The protein is ATP-dependent RNA helicase RhlB of Xanthomonas axonopodis pv. citri (strain 306).